The sequence spans 525 residues: Cobyric acid synthase (525 aa).

The GATase cobBQ-type domain occupies 251–452 (ELEIAVLYLP…FHGIFDNDLL (202 aa)). Cys-332 (nucleophile) is an active-site residue. Residue His-444 is part of the active site.

Belongs to the CobB/CobQ family. CobQ subfamily.

Its pathway is cofactor biosynthesis; adenosylcobalamin biosynthesis. Catalyzes amidations at positions B, D, E, and G on adenosylcobyrinic A,C-diamide. NH(2) groups are provided by glutamine, and one molecule of ATP is hydrogenolyzed for each amidation. The protein is Cobyric acid synthase of Pelotomaculum thermopropionicum (strain DSM 13744 / JCM 10971 / SI).